A 296-amino-acid chain; its full sequence is MNKEQLEKMKNGKGFIAALDQSGGSTPKALKEYGVNEDQYSNEDEMFQLVHDMRTRVVTSPSFSPDKILGAILFEQTMDREVEGKYTADYLADKGVVPFLKVDKGLAEEQNGVQLMKPIDNLDSLLDRANERHIFGTKMRSNILELNEQGIKDVVEQQFEVAKQIIAKGLVPIIEPEVNINAKDKAEIEKVLKAELKKGLDNLNADQLVMLKLTIPTEPNLYKELAEHPNVVRVVVLSGGYSREKANELLKDNAELIASFSRALASDLRAGQSKEEFDKALGDAVESIYDASVNKN.

Glu175 (proton acceptor) is an active-site residue. Lys212 acts as the Schiff-base intermediate with dihydroxyacetone-P in catalysis.

This sequence belongs to the class I fructose-bisphosphate aldolase family.

It catalyses the reaction beta-D-fructose 1,6-bisphosphate = D-glyceraldehyde 3-phosphate + dihydroxyacetone phosphate. It functions in the pathway carbohydrate degradation; glycolysis; D-glyceraldehyde 3-phosphate and glycerone phosphate from D-glucose: step 4/4. In Staphylococcus aureus (strain MSSA476), this protein is Fructose-bisphosphate aldolase class 1.